A 286-amino-acid polypeptide reads, in one-letter code: Beta-lactamase Ohio-1 (286 aa).

The signal sequence occupies residues 1–21; the sequence is MRYFRLCIISLLATLPLRVHA. Serine 66 (acyl-ester intermediate) is an active-site residue. A disulfide bond links cysteine 73 and cysteine 119. The Proton acceptor role is filled by glutamate 164. A substrate-binding site is contributed by 230–232; it reads KTG.

Belongs to the class-A beta-lactamase family.

It carries out the reaction a beta-lactam + H2O = a substituted beta-amino acid. The protein is Beta-lactamase Ohio-1 of Enterobacter cloacae.